The primary structure comprises 416 residues: Phosphoglycerate kinase (416 aa).

The (2R)-3-phosphoglycerate site is built by Val23, Asp24, Phe25, Asn26, Gln39, Arg40, Ser63, His64, Gly66, Arg67, Leu122, Arg123, His170, and Arg171. Position 214 (Gly214) interacts with ADP. Position 214 (Gly214) interacts with CDP. AMP is bound by residues Ala215 and Lys216. An ATP-binding site is contributed by Ala215. Residue Ala215 participates in Mg(2+) binding. Position 219 (Asp219) interacts with CDP. Asp219 is a binding site for Mg(2+). Lys220 is an AMP binding site. Residue Lys220 coordinates ATP. Gly238 provides a ligand contact to ADP. Gly238 lines the CDP pocket. AMP is bound by residues Gly239 and Gly312. The ATP site is built by Gly239 and Gly312. CDP contacts are provided by Gly337, Ala339, and Phe342. Phe342 provides a ligand contact to ADP. Glu343 serves as a coordination point for AMP. Glu343, Asp374, and Thr375 together coordinate ATP. Residue Asp374 participates in Mg(2+) binding.

This sequence belongs to the phosphoglycerate kinase family. As to quaternary structure, monomer. Mg(2+) serves as cofactor.

It localises to the cytoplasm. The protein localises to the mitochondrion. It carries out the reaction (2R)-3-phosphoglycerate + ATP = (2R)-3-phospho-glyceroyl phosphate + ADP. It participates in carbohydrate degradation; glycolysis; pyruvate from D-glyceraldehyde 3-phosphate: step 2/5. In terms of biological role, catalyzes one of the two ATP producing reactions in the glycolytic pathway via the reversible conversion of 1,3-diphosphoglycerate to 3-phosphoglycerate. Both L- and D- forms of purine and pyrimidine nucleotides can be used as substrates, but the activity is much lower on pyrimidines. Negatively regulates the biosynthesis of acetyl-CoA from pyruvate in the mitochondrion. In Hypocrea jecorina (Trichoderma reesei), this protein is Phosphoglycerate kinase (pgk1).